The primary structure comprises 134 residues: DNA-binding protein inhibitor ID-2 (134 aa).

Ser14 and Ser25 each carry phosphoserine. Positions 23 to 75 (SRSKTPVDDPMSLLYNMNDCYSKLKELVPSIPQNKKVTKMEILQHVIDYILDL) constitute a bHLH domain. Residues 30–83 (DDPMSLLYNMNDCYSKLKELVPSIPQNKKVTKMEILQHVIDYILDLQIALDSHP) form an interaction with IFI204 region. The Nuclear export signal signature appears at 106–115 (LNTDISILSL).

Interacts with GATA4 and NKX2-5. Interacts with NR0B2. Interacts with CLOCK and BMAL1. Interacts with IFI204. Interacts with NEDD9/HEF1. Interacts with ASB4; this interaction promotes ID2 proteasomal degradation. In terms of processing, polyubiquitinated; which is favored by Ifi204 and leads to proteasomal degradation. Ubiquitinated in a ASB4-depedent manner, leading to proteasomal degradation. Post-translationally, phosphorylated in vitro by CDK1, PKA and PKC.

It localises to the cytoplasm. Its subcellular location is the nucleus. Functionally, transcriptional regulator (lacking a basic DNA binding domain) which negatively regulates the basic helix-loop-helix (bHLH) transcription factors by forming heterodimers and inhibiting their DNA binding and transcriptional activity. Implicated in regulating a variety of cellular processes, including cellular growth, senescence, differentiation, apoptosis, angiogenesis, and neoplastic transformation. Inhibits skeletal muscle and cardiac myocyte differentiation. Regulates the circadian clock by repressing the transcriptional activator activity of the CLOCK-BMAL1 heterodimer. Restricts the CLOCK and BMAL1 localization to the cytoplasm. Plays a role in both the input and output pathways of the circadian clock: in the input component, is involved in modulating the magnitude of photic entrainment and in the output component, contributes to the regulation of a variety of liver clock-controlled genes involved in lipid metabolism. This chain is DNA-binding protein inhibitor ID-2 (Id2), found in Mus musculus (Mouse).